The primary structure comprises 173 residues: Large ribosomal subunit protein uL10 (173 aa).

It belongs to the universal ribosomal protein uL10 family. In terms of assembly, part of the ribosomal stalk of the 50S ribosomal subunit. The N-terminus interacts with L11 and the large rRNA to form the base of the stalk. The C-terminus forms an elongated spine to which L12 dimers bind in a sequential fashion forming a multimeric L10(L12)X complex.

In terms of biological role, forms part of the ribosomal stalk, playing a central role in the interaction of the ribosome with GTP-bound translation factors. In Geobacter sp. (strain M21), this protein is Large ribosomal subunit protein uL10.